The chain runs to 98 residues: UPF0251 protein VC0395_0048/VC395_A0084 (98 aa).

It belongs to the UPF0251 family.

The sequence is that of UPF0251 protein VC0395_0048/VC395_A0084 from Vibrio cholerae serotype O1 (strain ATCC 39541 / Classical Ogawa 395 / O395).